Here is a 230-residue protein sequence, read N- to C-terminus: Protein CWC15 homolog B (230 aa).

The interval 1–126 (MTTAARPTFE…DEDSDDDTAA (126 aa)) is disordered. A compositionally biased stretch (polar residues) spans 22–34 (DLSQLSKQYSSRD). The segment covering 52 to 84 (EEVRSRDFRRELEERERVAVRDKNRDRPTREHT) has biased composition (basic and acidic residues). Residues 102–124 (DADDPLTDEDADEDSDEDSDDDT) show a composition bias toward acidic residues. The stretch at 121-165 (DDDTAALLAELEKIKKERAEEQVRKELEQKAEEERIRMENILSGN) forms a coiled coil.

The protein belongs to the CWC15 family. Identified in the spliceosome C complex. Component of the minor spliceosome, which splices U12-type introns.

Its subcellular location is the nucleus. In terms of biological role, involved in pre-mRNA splicing as component of the spliceosome. The protein is Protein CWC15 homolog B (cwc15-b) of Xenopus laevis (African clawed frog).